Reading from the N-terminus, the 171-residue chain is Large ribosomal subunit protein bL9 (171 aa).

The protein belongs to the bacterial ribosomal protein bL9 family.

Binds to the 23S rRNA. The sequence is that of Large ribosomal subunit protein bL9 from Rickettsia peacockii (strain Rustic).